Consider the following 168-residue polypeptide: MLDLFNKTSQVQGRISAWLASNNLPHRPLGFDYQGVETLQIKPEDWPSIAVALYVNGFNYLRCQCGYDVYPGGPLASVYYLTKVDDNVDQPEEVCIKIFVPRENPKIPSIFWVWKTADYQERETYDMLGIVYESHPNLKRILMPESWLGWPLRKDYITPDFYELQDAY.

The protein belongs to the complex I 30 kDa subunit family. As to quaternary structure, NDH is composed of at least 16 different subunits, 5 of which are encoded in the nucleus.

The protein resides in the plastid. It is found in the chloroplast thylakoid membrane. It catalyses the reaction a plastoquinone + NADH + (n+1) H(+)(in) = a plastoquinol + NAD(+) + n H(+)(out). It carries out the reaction a plastoquinone + NADPH + (n+1) H(+)(in) = a plastoquinol + NADP(+) + n H(+)(out). NDH shuttles electrons from NAD(P)H:plastoquinone, via FMN and iron-sulfur (Fe-S) centers, to quinones in the photosynthetic chain and possibly in a chloroplast respiratory chain. The immediate electron acceptor for the enzyme in this species is believed to be plastoquinone. Couples the redox reaction to proton translocation, and thus conserves the redox energy in a proton gradient. The polypeptide is NAD(P)H-quinone oxidoreductase subunit J, chloroplastic (Chaetosphaeridium globosum (Charophycean green alga)).